The following is a 394-amino-acid chain: Phosphoglycerate kinase (394 aa).

Substrate-binding positions include 21–23 (DFN), Arg36, 59–62 (HLGR), Arg118, and Arg151. Ser183 carries the phosphoserine modification. An ATP-binding site is contributed by Lys201. Thr299 carries the post-translational modification Phosphothreonine. ATP is bound by residues Asn316, Glu323, and 350–353 (GGDS).

It belongs to the phosphoglycerate kinase family. In terms of assembly, monomer.

Its subcellular location is the cytoplasm. It carries out the reaction (2R)-3-phosphoglycerate + ATP = (2R)-3-phospho-glyceroyl phosphate + ADP. It participates in carbohydrate degradation; glycolysis; pyruvate from D-glyceraldehyde 3-phosphate: step 2/5. The protein is Phosphoglycerate kinase of Geobacillus stearothermophilus (Bacillus stearothermophilus).